Consider the following 246-residue polypeptide: Small ribosomal subunit protein uS2 (246 aa).

This sequence belongs to the universal ribosomal protein uS2 family.

The polypeptide is Small ribosomal subunit protein uS2 (Saccharophagus degradans (strain 2-40 / ATCC 43961 / DSM 17024)).